We begin with the raw amino-acid sequence, 746 residues long: NAD(P)H-quinone oxidoreductase subunit 5, chloroplastic (746 aa).

A run of 16 helical transmembrane segments spans residues tryptophan 9–phenylalanine 29, tryptophan 40–isoleucine 60, isoleucine 89–isoleucine 109, phenylalanine 125–isoleucine 145, valine 147–threonine 167, glycine 185–phenylalanine 205, valine 221–serine 241, threonine 258–alanine 278, leucine 280–isoleucine 300, leucine 327–isoleucine 347, alanine 354–serine 374, isoleucine 396–serine 416, leucine 425–tyrosine 445, isoleucine 547–proline 567, phenylalanine 608–tyrosine 628, and tyrosine 723–phenylalanine 743.

It belongs to the complex I subunit 5 family. As to quaternary structure, NDH is composed of at least 16 different subunits, 5 of which are encoded in the nucleus.

The protein localises to the plastid. It localises to the chloroplast thylakoid membrane. The enzyme catalyses a plastoquinone + NADH + (n+1) H(+)(in) = a plastoquinol + NAD(+) + n H(+)(out). The catalysed reaction is a plastoquinone + NADPH + (n+1) H(+)(in) = a plastoquinol + NADP(+) + n H(+)(out). NDH shuttles electrons from NAD(P)H:plastoquinone, via FMN and iron-sulfur (Fe-S) centers, to quinones in the photosynthetic chain and possibly in a chloroplast respiratory chain. The immediate electron acceptor for the enzyme in this species is believed to be plastoquinone. Couples the redox reaction to proton translocation, and thus conserves the redox energy in a proton gradient. This chain is NAD(P)H-quinone oxidoreductase subunit 5, chloroplastic (ndhF), found in Nasturtium officinale (Watercress).